The sequence spans 299 residues: Bifunctional protein FolD (299 aa).

NADP(+) is bound by residues 169–171, Ser-194, and Ile-235; that span reads GRS.

It belongs to the tetrahydrofolate dehydrogenase/cyclohydrolase family. As to quaternary structure, homodimer.

It catalyses the reaction (6R)-5,10-methylene-5,6,7,8-tetrahydrofolate + NADP(+) = (6R)-5,10-methenyltetrahydrofolate + NADPH. It carries out the reaction (6R)-5,10-methenyltetrahydrofolate + H2O = (6R)-10-formyltetrahydrofolate + H(+). The protein operates within one-carbon metabolism; tetrahydrofolate interconversion. Catalyzes the oxidation of 5,10-methylenetetrahydrofolate to 5,10-methenyltetrahydrofolate and then the hydrolysis of 5,10-methenyltetrahydrofolate to 10-formyltetrahydrofolate. The polypeptide is Bifunctional protein FolD (Trichormus variabilis (strain ATCC 29413 / PCC 7937) (Anabaena variabilis)).